A 595-amino-acid chain; its full sequence is Phytoene desaturase (595 aa).

Residues 1-23 form the signal peptide; that stretch reads MAETQRPRSAIIVGAGAGGIAVA. The chain crosses the membrane as a helical span at residues 574 to 594; that stretch reads SQRAFPLLVALMGVLYFLLFV.

Belongs to the carotenoid/retinoid oxidoreductase family. The cofactor is NAD(+).

It is found in the membrane. It carries out the reaction 15-cis-phytoene + A = all-trans-phytofluene + AH2. The catalysed reaction is all-trans-phytofluene + A = all-trans-zeta-carotene + AH2. The enzyme catalyses all-trans-zeta-carotene + A = all-trans-neurosporene + AH2. It catalyses the reaction all-trans-neurosporene + A = all-trans-lycopene + AH2. It carries out the reaction all-trans-lycopene + A = all-trans-3,4-didehydrolycopene + AH2. It functions in the pathway carotenoid biosynthesis; lycopene biosynthesis. Functionally, phytoene desaturase involved in the carotenoid biosynthesis pathway. Converts phytoene into 3,4-didehydrolycopene via the intermediates phytofluene, zeta-carotene, neurosporene and lycopene, by introducing up to five double bonds into phytoene. Is also able to desaturate 1-hydroxyneurosporene into 1-hydroxylycopene and 1-hydroxylycopene into 1-hydroxy-3,4-didehydrolycopene. Gamma-carotene and 1,19-dihydroxylycopene are not accepted as substrates. Neurosporaxanthin is synthesized from geranyl-geranyl pyrophosphate (GGPP) through several enzymatic activities. Phytoene synthase activity performed by the bifunctional enzyme al-2 first produces phytoene from geranyl-geranyl pyrophosphate (GGPP). The phytoene dehydrogenase al-1 then introduces 5 desaturations to lead to 3,4-didehydrolycopene via the intermediates phytofluene, zeta-carotene, neurosporene and lycopene. Al-2 cyclase activity then converts 3,4-didehydrolycopene into torulene. Al-2 can also convet lycopene into gamma-carotene which in turn is converted to beta-carotene by an additional al-2 cyclization reaction. Torulene is the substrate of the dioxidase cao-2 that breaks the molecule, removing five carbon atoms to yield beta-apo-4'-carotenal, whereas the aldehyde dehydrogenase ylo-1 mediates the last step by converting beta-apo-4'-carotenal into neurosporaxanthin. This chain is Phytoene desaturase, found in Neurospora crassa (strain ATCC 24698 / 74-OR23-1A / CBS 708.71 / DSM 1257 / FGSC 987).